The chain runs to 249 residues: Transmembrane protein 150C (249 aa).

Residues 1–9 (MDGKKCSVW) lie on the Cytoplasmic side of the membrane. A helical transmembrane segment spans residues 10-30 (MFLPLVFTLFTSAGLWIVYFI). The Extracellular segment spans residues 31 to 64 (AVEDDKILPLNSAERKPGVKHAPYISIAGDDPPA). A helical membrane pass occupies residues 65-85 (SCVFSQVMNMAAFLALVVAVL). Residues 86–97 (RFIQLKPKVLNP) lie on the Cytoplasmic side of the membrane. Residues 98 to 118 (WLNISGLVALCLASFGMTLLG) form a helical membrane-spanning segment. At 119-130 (NFQLTNDEEIHN) the chain is on the extracellular side. A helical transmembrane segment spans residues 131 to 151 (VGTSLTFGFGTLTCWIQAALT). Topologically, residues 152-168 (LKVNIKNEGRRVGIPRV) are cytoplasmic. The helical transmembrane segment at 169–189 (ILSASITLCVVLYFILMAQSI) threads the bilayer. The Extracellular portion of the chain corresponds to 190-192 (HMY). A helical transmembrane segment spans residues 193 to 213 (AARVQWGLVMCFLSYFGTFAV). At 214-249 (EFRHYRYEIVCSEYQENFLSFSESLSEASEYQTDQV) the chain is on the cytoplasmic side.

It belongs to the DRAM/TMEM150 family.

Its subcellular location is the cell membrane. It localises to the lysosome membrane. It catalyses the reaction Ca(2+)(in) = Ca(2+)(out). It carries out the reaction Na(+)(in) = Na(+)(out). The catalysed reaction is K(+)(in) = K(+)(out). The enzyme catalyses Mg(2+)(in) = Mg(2+)(out). Its function is as follows. Nonselective cationic channel with high permeability to Ca(2+). Component of a mechanosensitive cation channel, confers mechanically activated (MA) currents with slow inactivation kinetics. May contribute to proprioception. The protein is Transmembrane protein 150C of Homo sapiens (Human).